A 230-amino-acid polypeptide reads, in one-letter code: Large ribosomal subunit protein uL1 (230 aa).

The protein belongs to the universal ribosomal protein uL1 family. As to quaternary structure, part of the 50S ribosomal subunit.

Functionally, binds directly to 23S rRNA. The L1 stalk is quite mobile in the ribosome, and is involved in E site tRNA release. In terms of biological role, protein L1 is also a translational repressor protein, it controls the translation of the L11 operon by binding to its mRNA. The chain is Large ribosomal subunit protein uL1 from Sulfurimonas denitrificans (strain ATCC 33889 / DSM 1251) (Thiomicrospira denitrificans (strain ATCC 33889 / DSM 1251)).